The primary structure comprises 238 residues: Aerobic respiration control protein ArcA (238 aa).

The region spanning 5-118 is the Response regulatory domain; it reads HILIVEDELV…ELTIRARNLL (114 aa). Position 54 is a 4-aspartylphosphate (Asp-54). The ompR/PhoB-type DNA-binding region spans 134 to 234; the sequence is VESYKFNGWE…IHGEGYRFCG (101 aa).

Post-translationally, phosphorylated by ArcB.

Its subcellular location is the cytoplasm. In terms of biological role, member of the two-component regulatory system ArcB/ArcA. Represses a wide variety of aerobic enzymes under anaerobic conditions. It may also be involved in the osmoregulation of envelope proteins. When activated by ArcB, it negatively regulates the expression of genes of aerobic function. Activates the transcription of the plfB operon by binding to its promoter. The chain is Aerobic respiration control protein ArcA (arcA) from Escherichia coli O157:H7.